A 338-amino-acid chain; its full sequence is Ketol-acid reductoisomerase (NADP(+)) (338 aa).

The KARI N-terminal Rossmann domain maps to Met1–Thr181. Residues Tyr24–Gln27, Arg47, Ser50, Thr52, and Asp82–Gln85 contribute to the NADP(+) site. Residue His107 is part of the active site. NADP(+) is bound at residue Gly133. One can recognise a KARI C-terminal knotted domain in the interval Thr182 to Ile327. Mg(2+) contacts are provided by Asp190, Glu194, Glu226, and Glu230. Ser251 contributes to the substrate binding site.

This sequence belongs to the ketol-acid reductoisomerase family. It depends on Mg(2+) as a cofactor.

It catalyses the reaction (2R)-2,3-dihydroxy-3-methylbutanoate + NADP(+) = (2S)-2-acetolactate + NADPH + H(+). It carries out the reaction (2R,3R)-2,3-dihydroxy-3-methylpentanoate + NADP(+) = (S)-2-ethyl-2-hydroxy-3-oxobutanoate + NADPH + H(+). Its pathway is amino-acid biosynthesis; L-isoleucine biosynthesis; L-isoleucine from 2-oxobutanoate: step 2/4. It participates in amino-acid biosynthesis; L-valine biosynthesis; L-valine from pyruvate: step 2/4. Involved in the biosynthesis of branched-chain amino acids (BCAA). Catalyzes an alkyl-migration followed by a ketol-acid reduction of (S)-2-acetolactate (S2AL) to yield (R)-2,3-dihydroxy-isovalerate. In the isomerase reaction, S2AL is rearranged via a Mg-dependent methyl migration to produce 3-hydroxy-3-methyl-2-ketobutyrate (HMKB). In the reductase reaction, this 2-ketoacid undergoes a metal-dependent reduction by NADPH to yield (R)-2,3-dihydroxy-isovalerate. This Pseudomonas syringae pv. tomato (strain ATCC BAA-871 / DC3000) protein is Ketol-acid reductoisomerase (NADP(+)).